The following is a 626-amino-acid chain: MAEAPLPPPPGVEVDPDFEPFSRPRSCTWPLPRPEFNPSSSANSSPAPSLQPEPAAGNVDFLSNLSLLEESEDFDPAEALGVCGDFPCQDIRQLQPPVPQQHPQQQAGTLCAPSVPSALSPASSPSPLGAQQPRKSSSSRRNAWGNLSYADLISQAIESSPEKRLTLSQIYDWMVKSVPYFKDKGDSNSSAGWKNSIRHNLSLHSKFVRVQNEGTGKSSWWILNPEGGKNGKSPRRRAASMDNNSKFAKSRGRAAKKKATMQSSQDGSSDSPGSQFSKWPGSPSSQSNDDFEAWSTFRPRTSSNASTISGRLSPIMPEQDDLGDADVHNLVYPPSATKLTSTLPSLSEMGNSENMENLLDNLNLLSPNTSTQSSPASMMQQSGYLFTSPNTSLGSPNSEYRKYSYAQTGMNPVSQMPMQTVPENKSGYRAVGQYPVPAGLLKELLTSDSPPHNDILTPVDSAVSQANSRVLAQNSLMAPSSVMPTYGSQPTHNKMSSHPHSHQPPPNHPSVNGRTMTHNSGINRLSTVKTSVQVPMPQPIQMTSMGSYPVNSCNGYGRVGIVSIHQEILPSDLDDMFIESLDCDMESIIRNDLMEDGEADFNFDSILPNQSFPHSVTTTTHSWVSG.

Pro residues predominate over residues 1–11 (MAEAPLPPPPG). Disordered regions lie at residues 1–57 (MAEA…PAAG), 90–142 (DIRQ…SRRN), 218–319 (SSWW…MPEQ), and 484–519 (PTYG…MTHN). 2 stretches are compositionally biased toward low complexity: residues 37-48 (NPSSSANSSPAP) and 101-133 (QHPQ…AQQP). Positions 144-238 (WGNLSYADLI…KNGKSPRRRA (95 aa)) form a DNA-binding region, fork-head. Residues 248–259 (AKSRGRAAKKKA) show a composition bias toward basic residues. The segment covering 262–277 (QSSQDGSSDSPGSQFS) has biased composition (low complexity). Polar residues-rich tracts occupy residues 298 to 310 (RPRT…TISG) and 484 to 494 (PTYGSQPTHNK).

Post-translationally, phosphorylated by AKT1; insulin-induced. In terms of processing, IGF1 rapidly induces phosphorylation of Thr-28, Ser-240 and Ser-303. Phosphorylation of Ser-240 decreases DNA-binding activity and promotes the phosphorylation of Thr-28, and Ser-303, which leads to nuclear exclusion and loss of function. Phosphorylation of Ser-313 is independent of IGF1 and leads to reduced function.

The protein localises to the cytoplasm. It is found in the nucleus. Transcription factor that regulates metabolic homeostasis in response to oxidative stress. Binds to the consensus sequence 5'-TT[G/A]TTTTG-3' and the related Daf-16 family binding element (DBE) with consensus sequence 5'-TT[G/A]TTTAC-3'. Main regulator of redox balance and osteoblast numbers and controls bone mass. Orchestrates the endocrine function of the skeleton in regulating glucose metabolism. Also acts as a key regulator of chondrogenic commitment of skeletal progenitor cells in response to lipid availability: when lipids levels are low, translocates to the nucleus and promotes expression of sox9, which induces chondrogenic commitment and suppresses fatty acid oxidation. Acts synergistically with atf4 to suppress osteocalcin/bglap activity, increasing glucose levels and triggering glucose intolerance and insulin insensitivity. Also suppresses the transcriptional activity of runx2, an upstream activator of osteocalcin/bglap. May act as a positive regulator of apoptosis in cardiac smooth muscle cells as a result of its transcriptional activation of pro-apoptotic genes. The protein is Forkhead box protein O1 of Xenopus tropicalis (Western clawed frog).